The following is a 202-amino-acid chain: Probable nicotinate-nucleotide adenylyltransferase (202 aa).

This sequence belongs to the NadD family.

It catalyses the reaction nicotinate beta-D-ribonucleotide + ATP + H(+) = deamido-NAD(+) + diphosphate. It functions in the pathway cofactor biosynthesis; NAD(+) biosynthesis; deamido-NAD(+) from nicotinate D-ribonucleotide: step 1/1. Its function is as follows. Catalyzes the reversible adenylation of nicotinate mononucleotide (NaMN) to nicotinic acid adenine dinucleotide (NaAD). This chain is Probable nicotinate-nucleotide adenylyltransferase, found in Clostridium perfringens (strain 13 / Type A).